Reading from the N-terminus, the 122-residue chain is Small ribosomal subunit protein uS13 (122 aa).

The disordered stretch occupies residues 99–122; it reads RGQRTHTNARTRKGPAKAIAGKKK.

This sequence belongs to the universal ribosomal protein uS13 family. In terms of assembly, part of the 30S ribosomal subunit. Forms a loose heterodimer with protein S19. Forms two bridges to the 50S subunit in the 70S ribosome.

In terms of biological role, located at the top of the head of the 30S subunit, it contacts several helices of the 16S rRNA. In the 70S ribosome it contacts the 23S rRNA (bridge B1a) and protein L5 of the 50S subunit (bridge B1b), connecting the 2 subunits; these bridges are implicated in subunit movement. Contacts the tRNAs in the A and P-sites. The polypeptide is Small ribosomal subunit protein uS13 (Parvibaculum lavamentivorans (strain DS-1 / DSM 13023 / NCIMB 13966)).